Reading from the N-terminus, the 50-residue chain is Insulin-1 (50 aa).

3 disulfides stabilise this stretch: Cys-7–Cys-36, Cys-19–Cys-49, and Cys-35–Cys-40.

The protein belongs to the insulin family. In terms of assembly, heterodimer of a B chain and an A chain linked by two disulfide bonds.

It localises to the secreted. Its function is as follows. Insulin decreases blood glucose concentration. It increases cell permeability to monosaccharides, amino acids and fatty acids. It accelerates glycolysis, the pentose phosphate cycle, and glycogen synthesis in liver. This is Insulin-1 from Katsuwonus pelamis (Skipjack tuna).